Reading from the N-terminus, the 276-residue chain is ARL14 effector protein (276 aa).

The tract at residues 158–177 is disordered; the sequence is KQTEFAPEGGKREKRKLTKA. Lys176 is covalently cross-linked (Glycyl lysine isopeptide (Lys-Gly) (interchain with G-Cter in SUMO2)). Phosphoserine occurs at positions 182 and 266.

In terms of assembly, interacts with ARL14 and MYO1E.

The protein localises to the cytoplasm. Its function is as follows. Through its interaction with ARL14 and MYO1E, may connect MHC class II-containing cytoplasmic vesicles to the actin network and hence controls the movement of these vesicles along the actin cytoskeleton in dendritic cells. The sequence is that of ARL14 effector protein (Arl14ep) from Mus musculus (Mouse).